The chain runs to 58 residues: Small ribosomal subunit protein bS21 (58 aa).

Positions 36–58 (EHYEKPSVKRKKKSEAARRRKYR) are disordered. The span at 43-58 (VKRKKKSEAARRRKYR) shows a compositional bias: basic residues.

Belongs to the bacterial ribosomal protein bS21 family.

This Symbiobacterium thermophilum (strain DSM 24528 / JCM 14929 / IAM 14863 / T) protein is Small ribosomal subunit protein bS21.